Reading from the N-terminus, the 238-residue chain is Ribonuclease PH (238 aa).

Phosphate-binding positions include R86 and 124-126 (GTR).

Belongs to the RNase PH family. As to quaternary structure, homohexameric ring arranged as a trimer of dimers.

The catalysed reaction is tRNA(n+1) + phosphate = tRNA(n) + a ribonucleoside 5'-diphosphate. Functionally, phosphorolytic 3'-5' exoribonuclease that plays an important role in tRNA 3'-end maturation. Removes nucleotide residues following the 3'-CCA terminus of tRNAs; can also add nucleotides to the ends of RNA molecules by using nucleoside diphosphates as substrates, but this may not be physiologically important. Probably plays a role in initiation of 16S rRNA degradation (leading to ribosome degradation) during starvation. In Psychrobacter cryohalolentis (strain ATCC BAA-1226 / DSM 17306 / VKM B-2378 / K5), this protein is Ribonuclease PH.